A 155-amino-acid polypeptide reads, in one-letter code: MANQDIYANLTQLGGKTELPNSPEEAVLEKVPNPQAGTDYAVRFTAPEFTSLCPLTAQPDFAHIVIDYVPGDWLVESKSLKLYLGSFRNHGAFHEDCSVSIGKRLVELLAPKWLRVGAYWYPRGGIPIDVFYQTGPELPGVWIPDQGVPTYRGRG.

Cysteine 53 acts as the Thioimide intermediate in catalysis. Residue aspartate 60 is the Proton donor of the active site. Residues valine 75–serine 77 and histidine 94–glutamate 95 contribute to the substrate site.

This sequence belongs to the GTP cyclohydrolase I family. QueF type 1 subfamily.

It is found in the cytoplasm. It catalyses the reaction 7-aminomethyl-7-carbaguanine + 2 NADP(+) = 7-cyano-7-deazaguanine + 2 NADPH + 3 H(+). The protein operates within tRNA modification; tRNA-queuosine biosynthesis. Functionally, catalyzes the NADPH-dependent reduction of 7-cyano-7-deazaguanine (preQ0) to 7-aminomethyl-7-deazaguanine (preQ1). The protein is NADPH-dependent 7-cyano-7-deazaguanine reductase of Ruegeria pomeroyi (strain ATCC 700808 / DSM 15171 / DSS-3) (Silicibacter pomeroyi).